The sequence spans 429 residues: Histidine--tRNA ligase (429 aa).

This sequence belongs to the class-II aminoacyl-tRNA synthetase family. As to quaternary structure, homodimer.

Its subcellular location is the cytoplasm. It catalyses the reaction tRNA(His) + L-histidine + ATP = L-histidyl-tRNA(His) + AMP + diphosphate + H(+). The polypeptide is Histidine--tRNA ligase (Pseudomonas putida (strain W619)).